Here is a 133-residue protein sequence, read N- to C-terminus: Small ribosomal subunit protein uS8 (133 aa).

The protein belongs to the universal ribosomal protein uS8 family. Part of the 30S ribosomal subunit. Contacts proteins S5 and S12.

Its function is as follows. One of the primary rRNA binding proteins, it binds directly to 16S rRNA central domain where it helps coordinate assembly of the platform of the 30S subunit. The protein is Small ribosomal subunit protein uS8 of Salinibacter ruber (strain DSM 13855 / M31).